Reading from the N-terminus, the 289-residue chain is 4-diphosphocytidyl-2-C-methyl-D-erythritol kinase (289 aa).

Lys10 is a catalytic residue. 99–109 (PMGGGLGGGSS) is a binding site for ATP. Asp141 is a catalytic residue.

Belongs to the GHMP kinase family. IspE subfamily. Homodimer.

The enzyme catalyses 4-CDP-2-C-methyl-D-erythritol + ATP = 4-CDP-2-C-methyl-D-erythritol 2-phosphate + ADP + H(+). The protein operates within isoprenoid biosynthesis; isopentenyl diphosphate biosynthesis via DXP pathway; isopentenyl diphosphate from 1-deoxy-D-xylulose 5-phosphate: step 3/6. Catalyzes the phosphorylation of the position 2 hydroxy group of 4-diphosphocytidyl-2C-methyl-D-erythritol. The chain is 4-diphosphocytidyl-2-C-methyl-D-erythritol kinase from Enterobacter sp. (strain 638).